Here is a 289-residue protein sequence, read N- to C-terminus: Acetyl-coenzyme A carboxylase carboxyl transferase subunit beta (289 aa).

Positions 30-289 (IWRECPRCHS…SNAWRANHDK (260 aa)) constitute a CoA carboxyltransferase N-terminal domain. 4 residues coordinate Zn(2+): C34, C37, C52, and C55. The C4-type zinc-finger motif lies at 34–55 (CPRCHSRFYYRRFGNFDVCPEC).

This sequence belongs to the AccD/PCCB family. As to quaternary structure, acetyl-CoA carboxylase is a heterohexamer composed of biotin carboxyl carrier protein (AccB), biotin carboxylase (AccC) and two subunits each of ACCase subunit alpha (AccA) and ACCase subunit beta (AccD). The cofactor is Zn(2+).

Its subcellular location is the cytoplasm. It catalyses the reaction N(6)-carboxybiotinyl-L-lysyl-[protein] + acetyl-CoA = N(6)-biotinyl-L-lysyl-[protein] + malonyl-CoA. The protein operates within lipid metabolism; malonyl-CoA biosynthesis; malonyl-CoA from acetyl-CoA: step 1/1. Its function is as follows. Component of the acetyl coenzyme A carboxylase (ACC) complex. Biotin carboxylase (BC) catalyzes the carboxylation of biotin on its carrier protein (BCCP) and then the CO(2) group is transferred by the transcarboxylase to acetyl-CoA to form malonyl-CoA. This chain is Acetyl-coenzyme A carboxylase carboxyl transferase subunit beta, found in Oenococcus oeni (strain ATCC BAA-331 / PSU-1).